We begin with the raw amino-acid sequence, 417 residues long: Dihydroorotase (417 aa).

Residues histidine 60 and histidine 62 each contribute to the Zn(2+) site. Substrate is bound by residues 62-64 (HLR) and asparagine 94. Positions 138, 167, 207, and 275 each coordinate Zn(2+). The residue at position 138 (lysine 138) is an N6-carboxylysine. Aspartate 275 is an active-site residue. Residues histidine 279 and 289–290 (AG) contribute to the substrate site.

It belongs to the metallo-dependent hydrolases superfamily. DHOase family. Class I DHOase subfamily. Requires Zn(2+) as cofactor.

The enzyme catalyses (S)-dihydroorotate + H2O = N-carbamoyl-L-aspartate + H(+). It participates in pyrimidine metabolism; UMP biosynthesis via de novo pathway; (S)-dihydroorotate from bicarbonate: step 3/3. Functionally, catalyzes the reversible cyclization of carbamoyl aspartate to dihydroorotate. This is Dihydroorotase from Pyrococcus horikoshii (strain ATCC 700860 / DSM 12428 / JCM 9974 / NBRC 100139 / OT-3).